Here is a 490-residue protein sequence, read N- to C-terminus: Protein twist (490 aa).

Disordered regions lie at residues 48–72 (QLQH…QHAQ), 96–165 (PSNE…TGGS), and 244–264 (QQQQ…HAQM). The segment covering 54–68 (QHLHSHQHHQQHHQQ) has biased composition (basic residues). 2 stretches are compositionally biased toward low complexity: residues 102–134 (STSS…NPSG) and 244–263 (QQQQ…SHAQ). 2 positions are modified to phosphoserine: Ser-325 and Ser-328. The interval 330-361 (LDGSDAGGKAFRKPRRRLKRKPSKTEETDEFS) is disordered. Residues 339–351 (AFRKPRRRLKRKP) are compositionally biased toward basic residues. Residues 362–413 (NQRVMANVRERQRTQSLNDAFKSLQQIIPTLPSDKLSKIQTLKLATRYIDFL) enclose the bHLH domain.

In terms of assembly, efficient DNA binding requires dimerization with another bHLH protein. Homodimer. Interacts with akirin. As to expression, expressed in embryonic abdomen; a single cell ventrally, pairs of cells laterally and three cells dorsally in each hemisegment. In the thorax, there are patches of cells associated with the imaginal disks. During larval development, cells proliferate and, in the abdomen, they form ventral, lateral and dorsal clusters, which are the precursors of the adult abdominal muscles. In the thorax, they form populations of cells in the imaginal disks that correspond to the adepithelial cells.

Its subcellular location is the nucleus. In terms of biological role, involved in the establishment and dorsoventral patterning of germ layers in the embryo. This is Protein twist (twi) from Drosophila melanogaster (Fruit fly).